Consider the following 59-residue polypeptide: Large ribosomal subunit protein bL32 (59 aa).

It belongs to the bacterial ribosomal protein bL32 family.

In Limosilactobacillus reuteri (strain DSM 20016) (Lactobacillus reuteri), this protein is Large ribosomal subunit protein bL32.